Consider the following 332-residue polypeptide: Endonuclease 8-like 2 (332 aa).

The active-site Schiff-base intermediate with DNA is the P2. Residue E3 is the Proton donor of the active site. The active-site Proton donor; for beta-elimination activity is the K50. Residue K50 is modified to N6-acetyllysine. The tract at residues 59–121 (DEEMGPPGSS…EDDSEYLERD (63 aa)) is disordered. S68 carries the post-translational modification Phosphoserine. The segment covering 74–84 (PQKEVQKEGAA) has biased composition (basic and acidic residues). The segment covering 94 to 104 (GQKTLDGSSRS) has biased composition (polar residues). N6-acetyllysine is present on K154. N231 provides a ligand contact to DNA. Residues 284 to 320 (QVYQKEQCPAGHQVMKEAFGPEDGLQRLTWWCPQCQP) form an FPG-type zinc finger. Residue R310 is the Proton donor; for delta-elimination activity of the active site.

It belongs to the FPG family. Binds EP300. In terms of tissue distribution, detected in testis, skeletal muscle, heart, brain, placenta, lung, pancreas, kidney and liver.

The protein localises to the nucleus. The catalysed reaction is 2'-deoxyribonucleotide-(2'-deoxyribose 5'-phosphate)-2'-deoxyribonucleotide-DNA = a 3'-end 2'-deoxyribonucleotide-(2,3-dehydro-2,3-deoxyribose 5'-phosphate)-DNA + a 5'-end 5'-phospho-2'-deoxyribonucleoside-DNA + H(+). Acetylation of Lys-50 leads to loss of DNA nicking activity. Acetylation of Lys-154 has no effect. Involved in base excision repair of DNA damaged by oxidation or by mutagenic agents. Has DNA glycosylase activity towards 5-hydroxyuracil and other oxidized derivatives of cytosine with a preference for mismatched double-stranded DNA (DNA bubbles). Has low or no DNA glycosylase activity towards thymine glycol, 2-hydroxyadenine, hypoxanthine and 8-oxoguanine. Has AP (apurinic/apyrimidinic) lyase activity and introduces nicks in the DNA strand. Cleaves the DNA backbone by beta-delta elimination to generate a single-strand break at the site of the removed base with both 3'- and 5'-phosphates. The protein is Endonuclease 8-like 2 (NEIL2) of Homo sapiens (Human).